The sequence spans 365 residues: Isopentenyl-diphosphate delta-isomerase (365 aa).

8–9 provides a ligand contact to substrate; it reads RK. FMN contacts are provided by residues 67-69, Ser97, and Asn126; that span reads SIT. Position 97–99 (97–99) interacts with substrate; sequence SQR. Gln160 is a substrate binding site. Glu161 contributes to the Mg(2+) binding site. FMN contacts are provided by residues Lys192, Thr222, 272–274, and 293–294; these read GIR and AL.

This sequence belongs to the IPP isomerase type 2 family. In terms of assembly, homooctamer. Dimer of tetramers. It depends on FMN as a cofactor. Requires NADPH as cofactor. Mg(2+) serves as cofactor.

The protein localises to the cytoplasm. It catalyses the reaction isopentenyl diphosphate = dimethylallyl diphosphate. In terms of biological role, involved in the biosynthesis of isoprenoids. Catalyzes the 1,3-allylic rearrangement of the homoallylic substrate isopentenyl (IPP) to its allylic isomer, dimethylallyl diphosphate (DMAPP). The polypeptide is Isopentenyl-diphosphate delta-isomerase (Methanosarcina mazei (strain ATCC BAA-159 / DSM 3647 / Goe1 / Go1 / JCM 11833 / OCM 88) (Methanosarcina frisia)).